The sequence spans 463 residues: uncharacterized protein (463 aa).

This is an uncharacterized protein from Alkalihalophilus pseudofirmus (strain ATCC BAA-2126 / JCM 17055 / OF4) (Bacillus pseudofirmus).